The primary structure comprises 61 residues: Small ribosomal subunit protein uS14 (61 aa).

Zn(2+) contacts are provided by C24, C27, C40, and C43.

The protein belongs to the universal ribosomal protein uS14 family. Zinc-binding uS14 subfamily. Part of the 30S ribosomal subunit. Contacts proteins S3 and S10. The cofactor is Zn(2+).

Its function is as follows. Binds 16S rRNA, required for the assembly of 30S particles and may also be responsible for determining the conformation of the 16S rRNA at the A site. The polypeptide is Small ribosomal subunit protein uS14 (Elusimicrobium minutum (strain Pei191)).